A 385-amino-acid chain; its full sequence is AA13 family lytic polysaccharide monooxygenase aasA (385 aa).

Residues 1 to 18 (MKSLLALVAGNLVTAVSG) form the signal peptide. H19 serves as a coordination point for Cu(2+). Residue H19 is modified to Methylhistidine. The segment at 19–248 (HGYLTVPASR…AQVYLHCADI (230 aa)) is N-terminal catalytic module. 7 disulfide bridges follow: C40–C43, C66–C245, C102–C203, C118–C145, C153–C161, C167–C173, and C181–C192. Cu(2+) is bound at residue H109. N-linked (GlcNAc...) asparagine glycosylation occurs at N120. A Cu(2+)-binding site is contributed by Y242. The disordered stretch occupies residues 254–276 (SGSSPSPTSTTSTATSTTTPSST). The segment covering 256–276 (SSPSPTSTTSTATSTTTPSST) has biased composition (low complexity). Residues 278-385 (CASAISIPVT…TTATESGAWR (108 aa)) form the CBM20 domain. N-linked (GlcNAc...) asparagine glycosylation is present at N364.

The protein belongs to the polysaccharide monooxygenase AA13 family. Cu(2+) is required as a cofactor. The catalytically essential N-terminal histidine His-19 is post-translationally modified by methylation to prevent protonation of the histidine side chain, and protect the critical active site of the enzyme from oxidative damage.

It localises to the secreted. The enzyme catalyses starch + reduced acceptor + O2 = D-glucono-1,5-lactone-terminated malto-oligosaccharides + short-chain malto-oligosaccharides + acceptor + H2O.. In terms of biological role, starch-active polysaccharide monooxygenase that oxidizes the C1 position of starch substrates, but not in cellulose, chitin, polygalacturonan or esterified pectin, nor with Arabidopsis stem cell walls. Catalysis by LPMOs requires the reduction of the active-site copper from Cu(II) to Cu(I) by a reducing agent and H(2)O(2) or O(2) as a cosubstrate. This chain is AA13 family lytic polysaccharide monooxygenase aasA, found in Emericella nidulans (strain FGSC A4 / ATCC 38163 / CBS 112.46 / NRRL 194 / M139) (Aspergillus nidulans).